Reading from the N-terminus, the 389-residue chain is Maintenance of mitochondrial morphology protein 1-1 (389 aa).

At 1–22 (MSQFVLPAVASEGIINWPFLTG) the chain is on the lumenal side. The helical transmembrane segment at 23 to 43 (FMLGQFSVGLVLLIFVRFFIF) threads the bilayer. At 44–389 (SDQTEPDINT…YRSLQTSPRR (346 aa)) the chain is on the cytoplasmic side. The SMP-LTD domain maps to 83–278 (QPESLDWFSV…YPEYQQFELP (196 aa)). Disordered stretches follow at residues 283–345 (KTSA…PKFI) and 360–389 (FYEM…SPRR). The segment covering 330–341 (MSMSSQRPNINN) has biased composition (polar residues).

This sequence belongs to the MMM1 family. As to quaternary structure, homodimer. Component of the ER-mitochondria encounter structure (ERMES) or MDM complex, composed of MMM1, MDM10, MDM12 and MDM34. An MMM1 homodimer associates with one molecule of MDM12 on each side in a pairwise head-to-tail manner, and the SMP-LTD domains of MMM1 and MDM12 generate a continuous hydrophobic tunnel for phospholipid trafficking.

Its subcellular location is the endoplasmic reticulum membrane. Component of the ERMES/MDM complex, which serves as a molecular tether to connect the endoplasmic reticulum (ER) and mitochondria. Components of this complex are involved in the control of mitochondrial shape and protein biogenesis, and function in nonvesicular lipid trafficking between the ER and mitochondria. The MDM12-MMM11 subcomplex functions in the major beta-barrel assembly pathway that is responsible for biogenesis of all outer membrane beta-barrel proteins, and acts in a late step after the SAM complex. The MDM10-MDM12-MMM1 subcomplex further acts in the TOM40-specific pathway after the action of the MDM12-MMM1 complex. Essential for establishing and maintaining the structure of mitochondria and maintenance of mtDNA nucleoids. The chain is Maintenance of mitochondrial morphology protein 1-1 from Yarrowia lipolytica (strain CLIB 122 / E 150) (Yeast).